The following is a 296-amino-acid chain: MKLKRYLLVAKPGIIFGNLIAVAGGYFLAARGSVEPMLLLATVIGLSLVVASGCVLNNCIDRDIDRHMERTRGRVTVTGQISLKAALAHGLVLGVAGFGLLWWRTNPLTTALAGFGYFVYVGLYSLWFKRRSQYGTLVGSLSGAMPPVVGYCAVSGQFDAGAASLLAIFCLWQMPHSYAIAIFRLKDYEAAGIPVLPVARGIAVTKIHIVLYILAFMAATLALCLGGYAGYGYLLVAVAVSLWWLAIALTGYWTADDRVWARKLFAFSIVAITALSVMMSIDFQVAPATHLVASLF.

Transmembrane regions (helical) follow at residues 7 to 27, 36 to 56, 83 to 103, 108 to 128, 134 to 154, 163 to 183, 207 to 227, 229 to 249, and 265 to 285; these read LLVAKPGIIFGNLIAVAGGYF, PMLLLATVIGLSLVVASGCVL, LKAALAHGLVLGVAGFGLLWW, LTTALAGFGYFVYVGLYSLWF, YGTLVGSLSGAMPPVVGYCAV, ASLLAIFCLWQMPHSYAIAIF, IHIVLYILAFMAATLALCLGG, AGYGYLLVAVAVSLWWLAIAL, and FAFSIVAITALSVMMSIDFQV.

The protein belongs to the UbiA prenyltransferase family. Protoheme IX farnesyltransferase subfamily.

The protein localises to the cell inner membrane. The catalysed reaction is heme b + (2E,6E)-farnesyl diphosphate + H2O = Fe(II)-heme o + diphosphate. It participates in porphyrin-containing compound metabolism; heme O biosynthesis; heme O from protoheme: step 1/1. Converts heme B (protoheme IX) to heme O by substitution of the vinyl group on carbon 2 of heme B porphyrin ring with a hydroxyethyl farnesyl side group. In Pseudomonas aeruginosa (strain UCBPP-PA14), this protein is Protoheme IX farnesyltransferase 2.